The chain runs to 513 residues: Protein CYCLOPS (513 aa).

Residues 327–435 form a disordered region; sequence QIHGGTASGE…ERSRKMAEAK (109 aa). A compositionally biased stretch (low complexity) spans 334–347; that stretch reads SGEPSQSESSAAAP. Residues 359-381 are compositionally biased toward polar residues; the sequence is PSNSSQTLCDSSWKQVGESTQNR. Basic and acidic residues predominate over residues 384–396; the sequence is GVREQIMDNLKDD. 2 consecutive short sequence motifs (nuclear localization signal) follow at residues 397–401 and 421–424; these read RKRKR and KKRR. The stretch at 447 to 513 forms a coiled coil; it reads MQAVMKRCEN…ERLLSETGKI (67 aa).

This sequence belongs to the CYCLOPS family.

The protein resides in the nucleus. In terms of biological role, involved symbiotic signaling. Required for root infection by symbiotic rhizobia, infection thread (IT) formation, and nodule development. Required for symbiosome formation (i.e. the release of the bacteria from the ITs) and subsequent symbiosome development. Involved in arbuscular mycorrhizal (AM) symbiosis. The polypeptide is Protein CYCLOPS (Pisum sativum (Garden pea)).